We begin with the raw amino-acid sequence, 219 residues long: Cytidylate kinase (219 aa).

Residue 21–29 (GPAASGKGT) participates in ATP binding.

This sequence belongs to the cytidylate kinase family. Type 1 subfamily.

The protein localises to the cytoplasm. The enzyme catalyses CMP + ATP = CDP + ADP. The catalysed reaction is dCMP + ATP = dCDP + ADP. This chain is Cytidylate kinase, found in Rickettsia akari (strain Hartford).